Consider the following 283-residue polypeptide: MKKKKLFLGTIISCVVLALSACGSSDNVVTSKVGNITEKELSKELRQKYGESTLYQMVLSKALLDKYKVSDEEAKKQVEEAKDKMGDNFKSTLEQVGLKNEDELKEKMKPEIAFEKAIKATVTEKDVKDNYKPEMKVSHILVKDEKTAKEVKEKVNNGEDFAALAKQYSEDTGSKEQGGEITGFAPGQTVKEFEEAAYKLDAGQVSEPVKTTYGYHIIKVTDKKELKPFDEVKDSIRKDIEQQRLQDTTGKWKQQVVNELLKDADIKVNDKEFKNTFEFLEKK.

Residues 1 to 21 form the signal peptide; it reads MKKKKLFLGTIISCVVLALSA. C22 carries N-palmitoyl cysteine lipidation. C22 carries the S-diacylglycerol cysteine lipid modification. One can recognise a PpiC domain in the interval 132–222; it reads KPEMKVSHIL…YGYHIIKVTD (91 aa).

The protein belongs to the PrsA family.

It localises to the cell membrane. It catalyses the reaction [protein]-peptidylproline (omega=180) = [protein]-peptidylproline (omega=0). Functionally, plays a major role in protein secretion by helping the post-translocational extracellular folding of several secreted proteins. Important for the secretion of the protective antigen. The three PsrA proteins in this organism show different but overlapping substrate specificities. In Bacillus anthracis, this protein is Foldase protein PrsA 3 (prsA3).